Reading from the N-terminus, the 397-residue chain is Aromatic-amino-acid aminotransferase (397 aa).

Substrate-binding residues include Gly-34, Tyr-66, Trp-131, and Asn-184. Lys-247 carries the post-translational modification N6-(pyridoxal phosphate)lysine. Arg-281 and Arg-375 together coordinate substrate.

It belongs to the class-I pyridoxal-phosphate-dependent aminotransferase family. Homodimer. Pyridoxal 5'-phosphate is required as a cofactor.

Its subcellular location is the cytoplasm. The catalysed reaction is an aromatic L-alpha-amino acid + 2-oxoglutarate = an aromatic oxo-acid + L-glutamate. It carries out the reaction (3S)-3-methyl-L-phenylalanine + 2-oxoglutarate = (3S)-2-oxo-3-phenylbutanoate + L-glutamate. The protein operates within amino-acid biosynthesis; L-phenylalanine biosynthesis; L-phenylalanine from phenylpyruvate (ArAT route): step 1/1. Its pathway is amino-acid biosynthesis; L-tyrosine biosynthesis; L-tyrosine from (4-hydroxyphenyl)pyruvate: step 1/1. In terms of biological role, broad-specificity enzyme that catalyzes the transamination of 2-ketoisocaproate, p-hydroxyphenylpyruvate, and phenylpyruvate to yield leucine, tyrosine, and phenylalanine, respectively. In vitro, is able to catalyze the conversion of beta-methyl phenylpyruvate to the nonproteinogenic amino acid (2S,3S)-beta-methyl-phenylalanine, a building block of the antibiotic mannopeptimycin produced by Streptomyces hygroscopicus NRRL3085. The protein is Aromatic-amino-acid aminotransferase (tyrB) of Escherichia coli (strain K12).